We begin with the raw amino-acid sequence, 90 residues long: Small ribosomal subunit protein uS15 (90 aa).

It belongs to the universal ribosomal protein uS15 family. As to quaternary structure, part of the 30S ribosomal subunit. Forms a bridge to the 50S subunit in the 70S ribosome, contacting the 23S rRNA.

Its function is as follows. One of the primary rRNA binding proteins, it binds directly to 16S rRNA where it helps nucleate assembly of the platform of the 30S subunit by binding and bridging several RNA helices of the 16S rRNA. Forms an intersubunit bridge (bridge B4) with the 23S rRNA of the 50S subunit in the ribosome. The chain is Small ribosomal subunit protein uS15 from Wolbachia pipientis subsp. Culex pipiens (strain wPip).